The following is a 359-amino-acid chain: Protein URE2 (359 aa).

Residues 39-82 are disordered; sequence FSAGVNNNNNNSSSSNNNNNNNNNAQNNNSGRNGSQSNDNGNNI. Residues 44-81 show a composition bias toward low complexity; that stretch reads NNNNNNSSSSNNNNNNNNNAQNNNSGRNGSQSNDNGNN. A GST N-terminal domain is found at 117-201; the sequence is EGYTLFSHRS…HLVNKYYKET (85 aa). In terms of domain architecture, GST C-terminal spans 210 to 359; sequence DLADQSQINA…PAVIKALRGE (150 aa).

Belongs to the GST superfamily. Homodimer.

Plays an important role in the cellular response to the nitrogen source. URE2 gene plays a major part in the repression of GLN1 and GDH2 genes by glutamine, and is required for the inactivation of glutamine synthetase. URE2 gene product may catalytically inactivate GLN3 in response to an increase in the intracellular concentration of glutamine. The polypeptide is Protein URE2 (URE2) (Saccharomyces paradoxus (Yeast)).